The following is a 268-amino-acid chain: Inositol monophosphatase 3 (268 aa).

4 residues coordinate Mg(2+): E71, D91, L93, and D94. Substrate is bound at residue E71. Substrate is bound by residues 93 to 96, 194 to 196, E213, and D221; these read LDGT and GSC. D221 contributes to the Mg(2+) binding site.

Belongs to the inositol monophosphatase superfamily. Requires Mg(2+) as cofactor. Expressed in the shoot apex, roots, stems, leaves, flowers and young and mature green fruits.

The catalysed reaction is a myo-inositol phosphate + H2O = myo-inositol + phosphate. It participates in polyol metabolism; myo-inositol biosynthesis; myo-inositol from D-glucose 6-phosphate: step 2/2. In terms of biological role, responsible for the provision of inositol required for synthesis of phosphatidylinositol and polyphosphoinositides. This Solanum lycopersicum (Tomato) protein is Inositol monophosphatase 3 (IMP3).